A 588-amino-acid polypeptide reads, in one-letter code: Snake venom 5'-nucleotidase (588 aa).

The N-terminal stretch at 1 to 40 (MQTPKRRRGAQGCPRSSPSPPLLLLVGAVWFCAALSVAAG) is a signal peptide. Residues Asp-51 and His-53 each contribute to the Zn(2+) site. Cys-66 and Cys-71 are joined by a disulfide. Residue Asn-88 is glycosylated (N-linked (GlcNAc...) asparagine). Residues Asp-99 and Asn-131 each coordinate Zn(2+). N-linked (GlcNAc...) asparagine glycosylation occurs at Asn-167. Residues His-234 and His-257 each contribute to the Zn(2+) site. 3 N-linked (GlcNAc...) asparagine glycosylation sites follow: Asn-327, Asn-347, and Asn-361. Cystine bridges form between Cys-367-Cys-372 and Cys-379-Cys-401. Position 368 (Arg-368) interacts with AMP. Residues Asn-404 and Arg-409 each coordinate AMP. Asn-418 carries N-linked (GlcNAc...) asparagine glycosylation. Phe-432 contributes to the AMP binding site. An intrachain disulfide couples Cys-491 to Cys-494. 2 residues coordinate AMP: Phe-515 and Asp-521. Asn-532 carries N-linked (GlcNAc...) asparagine glycosylation. Ser-564 is lipidated: GPI-anchor amidated serine. Residues 565-588 (AGTLFQAQLFLTWGLCISLLYFIL) constitute a propeptide, removed in mature form.

The protein belongs to the 5'-nucleotidase family. Zn(2+) is required as a cofactor. Post-translationally, venom 5'-nucleotidases (or a part thereof) may be released into the venom via exosome-like vesicles. They may be attached via a GPI anchor to the membrane of these vesicles. Soluble forms of 5'-nucleotidase might be released by cleavage of the ectodomain in the exosome-like vesicles or venom gland cells. In terms of tissue distribution, expressed by the venom gland.

It localises to the membrane. It catalyses the reaction a ribonucleoside 5'-phosphate + H2O = a ribonucleoside + phosphate. Its function is as follows. Hydrolyzes nucleotides into nucleosides. Snake venom 5'-nucleotidases are widely distributed among venomous snake taxa, but there is a lack of information about their biological activities. They have been shown to inhibit platelet aggregation. This effect may be due to the liberation of inhibitory AMP or adenosine by its action on ADP released upon initiation of aggregation. Venom 5'-nucleotidases are also known to synergistically act in vivo with other toxins like ADPases, phospholipases, and disintegrins to exert a more pronounced anti-coagulant effect. In Gloydius brevicauda (Korean slamosa snake), this protein is Snake venom 5'-nucleotidase.